A 1266-amino-acid polypeptide reads, in one-letter code: SUMO-interacting motif-containing protein 1 (1266 aa).

Positions 1 to 35 are disordered; it reads MEDFIVISDDSGSESSAGTRSGRARRLRRALSRTP. Positions 22–31 are enriched in basic residues; sequence GRARRLRRAL. The SUMO interaction motif 1 (SIM); mediates the binding to polysumoylated substrates motif lies at 45 to 49; sequence FIDLT. The SUMO interaction motif 2 (SIM); mediates the binding to polysumoylated substrates signature appears at 64–68; it reads VIDLT. Low complexity-rich tracts occupy residues 183–197 and 532–553; these read SPFSSTSNNSSSSSN and SSGGVTQSSGGVIQSSSGVPQS. Disordered stretches follow at residues 183 to 206, 532 to 732, 756 to 812, and 1024 to 1052; these read SPFSSTSNNSSSSSNQRTSLPCPQ, SSGG…SGDV, NRHS…PGSA, and LTPPQDETQTSPGPGVLKTSSDHLSPQPN. A compositionally biased stretch (polar residues) spans 560 to 571; the sequence is SPGSVSQSSGDV. Residues 764 to 777 are compositionally biased toward low complexity; sequence SAPSSPSCSANPLS. The interaction with SLF2 stretch occupies residues 779–1266; that stretch reads QSEFSSEKRP…NPDTEPASER (488 aa). The tract at residues 857-1266 is required for inhibition of CAPN3 protease activity; the sequence is SKGQKLEPIP…NPDTEPASER (410 aa). The tract at residues 865 to 1200 is NSE5-like domain; it reads IPHRRLRMVT…IDRKDLIIKR (336 aa).

As to quaternary structure, forms a heterodimer with SLF2. Interacts (via SIM domains) with SUMO1 and SUMO2. Interacts with CAPN3 and CTBP1. Interacts with SMC6 and ZNF451.

The protein resides in the nucleus. The protein localises to the PML body. Inhibits the protease activity of CAPN3. May play a role in SMC5-SMC6 complex recruitment for viral restriction. Forms a complex with SLF2 and this complex is required to recruit SMC5-SMC6 complex to PML nuclear bodies and sites of viral replication. The polypeptide is SUMO-interacting motif-containing protein 1 (Simc1) (Rattus norvegicus (Rat)).